Reading from the N-terminus, the 140-residue chain is Large ribosomal subunit protein uL16 (140 aa).

A compositionally biased stretch (basic residues) spans 1 to 14; it reads MLSPRRTKFRKQQR. The interval 1 to 22 is disordered; it reads MLSPRRTKFRKQQRGRMEGAAT.

This sequence belongs to the universal ribosomal protein uL16 family. As to quaternary structure, part of the 50S ribosomal subunit.

Binds 23S rRNA and is also seen to make contacts with the A and possibly P site tRNAs. In Cyanothece sp. (strain PCC 7425 / ATCC 29141), this protein is Large ribosomal subunit protein uL16.